We begin with the raw amino-acid sequence, 393 residues long: Succinate--CoA ligase [ADP-forming] subunit beta (393 aa).

The ATP-grasp domain maps to 9–242; it reads KELFAKHGVP…RAATDPLEWK (234 aa). ATP contacts are provided by residues Lys-45, 52 to 54, Ser-94, and Glu-99; that span reads GRG. Asn-191 and Asp-211 together coordinate Mg(2+). Substrate-binding positions include Asn-262 and 324-326; that span reads GIT.

This sequence belongs to the succinate/malate CoA ligase beta subunit family. Heterotetramer of two alpha and two beta subunits. Requires Mg(2+) as cofactor.

The catalysed reaction is succinate + ATP + CoA = succinyl-CoA + ADP + phosphate. It catalyses the reaction GTP + succinate + CoA = succinyl-CoA + GDP + phosphate. It functions in the pathway carbohydrate metabolism; tricarboxylic acid cycle; succinate from succinyl-CoA (ligase route): step 1/1. Succinyl-CoA synthetase functions in the citric acid cycle (TCA), coupling the hydrolysis of succinyl-CoA to the synthesis of either ATP or GTP and thus represents the only step of substrate-level phosphorylation in the TCA. The beta subunit provides nucleotide specificity of the enzyme and binds the substrate succinate, while the binding sites for coenzyme A and phosphate are found in the alpha subunit. This is Succinate--CoA ligase [ADP-forming] subunit beta from Mycobacterium leprae (strain Br4923).